The following is a 421-amino-acid chain: 3-phosphoshikimate 1-carboxyvinyltransferase (421 aa).

The 3-phosphoshikimate site is built by lysine 21, serine 22, and arginine 26. Phosphoenolpyruvate is bound at residue lysine 21. Phosphoenolpyruvate is bound by residues glycine 93 and arginine 121. 3-phosphoshikimate-binding residues include serine 166, serine 167, glutamine 168, serine 194, aspartate 310, and lysine 337. Glutamine 168 serves as a coordination point for phosphoenolpyruvate. The Proton acceptor role is filled by aspartate 310. 3 residues coordinate phosphoenolpyruvate: arginine 341, arginine 382, and lysine 407.

The protein belongs to the EPSP synthase family. Monomer.

It is found in the cytoplasm. The enzyme catalyses 3-phosphoshikimate + phosphoenolpyruvate = 5-O-(1-carboxyvinyl)-3-phosphoshikimate + phosphate. The protein operates within metabolic intermediate biosynthesis; chorismate biosynthesis. Functionally, catalyzes the transfer of the enolpyruvyl moiety of phosphoenolpyruvate (PEP) to the 5-hydroxyl of shikimate-3-phosphate (S3P) to produce enolpyruvyl shikimate-3-phosphate and inorganic phosphate. This is 3-phosphoshikimate 1-carboxyvinyltransferase from Methanoregula boonei (strain DSM 21154 / JCM 14090 / 6A8).